Reading from the N-terminus, the 532-residue chain is Glucose-6-phosphate isomerase (532 aa).

Residue glutamate 330 is the Proton donor of the active site. Residues histidine 359 and lysine 460 contribute to the active site.

This sequence belongs to the GPI family.

The protein localises to the cytoplasm. It carries out the reaction alpha-D-glucose 6-phosphate = beta-D-fructose 6-phosphate. The protein operates within carbohydrate biosynthesis; gluconeogenesis. It functions in the pathway carbohydrate degradation; glycolysis; D-glyceraldehyde 3-phosphate and glycerone phosphate from D-glucose: step 2/4. Its function is as follows. Catalyzes the reversible isomerization of glucose-6-phosphate to fructose-6-phosphate. The sequence is that of Glucose-6-phosphate isomerase from Prochlorococcus marinus (strain MIT 9211).